The chain runs to 291 residues: 4-hydroxy-tetrahydrodipicolinate synthase (291 aa).

A pyruvate-binding site is contributed by Thr44. Tyr132 (proton donor/acceptor) is an active-site residue. Lys161 serves as the catalytic Schiff-base intermediate with substrate. A pyruvate-binding site is contributed by Ile202.

This sequence belongs to the DapA family. Homotetramer; dimer of dimers.

Its subcellular location is the cytoplasm. The catalysed reaction is L-aspartate 4-semialdehyde + pyruvate = (2S,4S)-4-hydroxy-2,3,4,5-tetrahydrodipicolinate + H2O + H(+). Its pathway is amino-acid biosynthesis; L-lysine biosynthesis via DAP pathway; (S)-tetrahydrodipicolinate from L-aspartate: step 3/4. In terms of biological role, catalyzes the condensation of (S)-aspartate-beta-semialdehyde [(S)-ASA] and pyruvate to 4-hydroxy-tetrahydrodipicolinate (HTPA). The chain is 4-hydroxy-tetrahydrodipicolinate synthase from Endomicrobium trichonymphae.